Here is a 30-residue protein sequence, read N- to C-terminus: 80 kDa carcinoembryonic antigen-binding protein (30 aa).

As to quaternary structure, binds to carcinoembryonic antigen (CEA). The N-terminus is blocked.

It localises to the cell membrane. May play a role in the development of hepatic metastases from colorectal cancers. The sequence is that of 80 kDa carcinoembryonic antigen-binding protein from Rattus norvegicus (Rat).